Reading from the N-terminus, the 181-residue chain is TATA-box-binding protein (181 aa).

2 consecutive repeat copies span residues 8-84 (IENI…VDLM) and 99-175 (IQNI…YDRL).

This sequence belongs to the TBP family.

Its function is as follows. General factor that plays a role in the activation of archaeal genes transcribed by RNA polymerase. Binds specifically to the TATA box promoter element which lies close to the position of transcription initiation. This is TATA-box-binding protein from Methanobrevibacter smithii (strain ATCC 35061 / DSM 861 / OCM 144 / PS).